We begin with the raw amino-acid sequence, 242 residues long: Polycomb group RING finger protein 3 (242 aa).

The segment at 17 to 56 (CRLCSGYLIDATTVTECLHTFCRSCLVKYLEENNTCPTCR) adopts an RING-type zinc-finger fold. The tract at residues 115 to 149 (AKQHLDPHRNGETKADDSSNKEAAEEKQEEDGDYH) is disordered. Residues 117-140 (QHLDPHRNGETKADDSSNKEAAEE) are compositionally biased toward basic and acidic residues. The interaction with BCORL1 stretch occupies residues 132 to 242 (SSNKEAAEEK…LHYRPKMDLL (111 aa)).

Component of a PRC1-like complex that contains PCGF3, RNF2 and RYBP. Interacts with CBX6, CBX7 and CBX8. Interacts with BCORL1.

It is found in the nucleus. Its subcellular location is the nucleoplasm. Functionally, component of a Polycomb group (PcG) multiprotein PRC1-like complex, a complex class required to maintain the transcriptionally repressive state of many genes, including Hox genes, throughout development. PcG PRC1 complex acts via chromatin remodeling and modification of histones; it mediates monoubiquitination of histone H2A 'Lys-119', rendering chromatin heritably changed in its expressibility. Within the PRC1-like complex, regulates RNF2 ubiquitin ligase activity. Plays a redundant role with PCGF5 as part of a PRC1-like complex that mediates monoubiquitination of histone H2A 'Lys-119' on the X chromosome and is required for normal silencing of one copy of the X chromosome in XX females. The protein is Polycomb group RING finger protein 3 (PCGF3) of Bos taurus (Bovine).